We begin with the raw amino-acid sequence, 80 residues long: UPF0180 protein GK1051 (80 aa).

This sequence belongs to the UPF0180 family.

This Geobacillus kaustophilus (strain HTA426) protein is UPF0180 protein GK1051.